Here is a 548-residue protein sequence, read N- to C-terminus: Flagellin (548 aa).

It belongs to the bacterial flagellin family.

Its subcellular location is the secreted. The protein resides in the bacterial flagellum. Its function is as follows. Flagellin is the subunit protein which polymerizes to form the filaments of bacterial flagella. The sequence is that of Flagellin (fliC) from Escherichia coli O127:H6 (strain E2348/69 / EPEC).